We begin with the raw amino-acid sequence, 69 residues long: uncharacterized protein (69 aa).

Residues 13–35 form a helical membrane-spanning segment; the sequence is IRSINPTLLNFINYFLLIVPQFI.

The protein localises to the membrane. This is an uncharacterized protein from Saccharomyces cerevisiae (strain ATCC 204508 / S288c) (Baker's yeast).